The following is a 45-amino-acid chain: Proteinase inhibitor IIA (45 aa).

3 disulfides stabilise this stretch: cysteine 10/cysteine 24, cysteine 14/cysteine 35, and cysteine 20/cysteine 43.

Belongs to the protease inhibitor I20 (potato type II proteinase inhibitor) family.

The protein localises to the secreted. In terms of biological role, inhibits trypsin strongly and chymotrypsin temporarily. The polypeptide is Proteinase inhibitor IIA (Solanum tuberosum (Potato)).